The chain runs to 190 residues: Potassium-transporting ATPase KdpC subunit (190 aa).

Residues 10–30 (TFLFLLLITGGVYPLLTTALG) form a helical membrane-spanning segment.

The protein belongs to the KdpC family. As to quaternary structure, the system is composed of three essential subunits: KdpA, KdpB and KdpC.

It is found in the cell inner membrane. In terms of biological role, part of the high-affinity ATP-driven potassium transport (or Kdp) system, which catalyzes the hydrolysis of ATP coupled with the electrogenic transport of potassium into the cytoplasm. This subunit acts as a catalytic chaperone that increases the ATP-binding affinity of the ATP-hydrolyzing subunit KdpB by the formation of a transient KdpB/KdpC/ATP ternary complex. The sequence is that of Potassium-transporting ATPase KdpC subunit from Escherichia coli O127:H6 (strain E2348/69 / EPEC).